The chain runs to 223 residues: Histone H1.5 (223 aa).

Positions 1 to 14 are enriched in low complexity; the sequence is MSETAPAETAAPAP. The tract at residues 1 to 56 is disordered; sequence MSETAPAETAAPAPVEKSPAKKKTTKKAGAAKRKATGPPVSELITKAVSASKERGG. S2 bears the N-acetylserine mark. S2 carries the phosphoserine modification. At K17 the chain carries N6-acetyllysine. A Phosphoserine modification is found at S18. Over residues 20–35 the composition is skewed to basic residues; that stretch reads AKKKTTKKAGAAKRKA. K27 bears the N6-methyllysine mark. Residue K34 is modified to N6-(beta-hydroxybutyryl)lysine; alternate. K34 bears the N6-succinyllysine; alternate mark. The residue at position 36 (T36) is a Phosphothreonine. An H15 domain is found at 36–109; it reads TGPPVSELIT…GASGSFKLNK (74 aa). K46 bears the N6-acetyllysine mark. K52 carries the post-translational modification N6-(beta-hydroxybutyryl)lysine. Position 54 is a citrulline (R54). K64 bears the N6-(beta-hydroxybutyryl)lysine mark. K75 carries the post-translational modification N6-acetyllysine. N6-(beta-hydroxybutyryl)lysine is present on residues K85, K90, and K106. The interval 91–223 is disordered; sequence GTLVQTKGTG…KAKKAVSKKK (133 aa). A compositionally biased stretch (basic residues) spans 119 to 130; it reads KAKKTGAAKAKK. Phosphothreonine is present on residues T135 and T152. Over residues 137 to 158 the composition is skewed to basic residues; the sequence is KKPKKTAGAKKTVKKTPKKAKK. N6-acetyllysine is present on K165. Residues 166-184 show a composition bias toward basic residues; sequence KVAKSPKKAKAAAKPKKAA. A phosphoserine mark is found at S170 and S186. The span at 191-223 shows a compositional bias: basic residues; sequence KAVKSKASKPKVTKPKTAKPKAAKAKKAVSKKK.

This sequence belongs to the histone H1/H5 family. As to quaternary structure, interacts with MSX1. Post-translationally, H1 histones are progressively phosphorylated during the cell cycle, becoming maximally phosphorylated during late G2 phase and M phase, and being dephosphorylated sharply thereafter. In terms of processing, citrullination at Arg-54 (H1R54ci) by PADI4 takes place within the DNA-binding site of H1 and results in its displacement from chromatin and global chromatin decondensation, thereby promoting pluripotency and stem cell maintenance. Hydroxybutyrylation of histones is induced by starvation.

The protein resides in the nucleus. It localises to the chromosome. Functionally, histone H1 protein binds to linker DNA between nucleosomes forming the macromolecular structure known as the chromatin fiber. Histones H1 are necessary for the condensation of nucleosome chains into higher-order structured fibers. Also acts as a regulator of individual gene transcription through chromatin remodeling, nucleosome spacing and DNA methylation. This is Histone H1.5 (H1-5) from Mus musculus (Mouse).